Consider the following 285-residue polypeptide: 1,4-dihydroxy-2-naphthoyl-CoA synthase (285 aa).

Substrate is bound by residues R45, 84-89 (SGGDQK), Y97, 129-133 (YSIGG), T155, S161, Y258, and K273. A hydrogencarbonate-binding site is contributed by 154–156 (QTG).

This sequence belongs to the enoyl-CoA hydratase/isomerase family. MenB subfamily. Homohexamer. Dimer of a homotrimer. Hydrogencarbonate is required as a cofactor.

It carries out the reaction 2-succinylbenzoyl-CoA + H(+) = 1,4-dihydroxy-2-naphthoyl-CoA + H2O. The protein operates within quinol/quinone metabolism; 1,4-dihydroxy-2-naphthoate biosynthesis; 1,4-dihydroxy-2-naphthoate from chorismate: step 6/7. Its pathway is quinol/quinone metabolism; menaquinone biosynthesis. With respect to regulation, inhibited by sulfite and nitrate. Converts o-succinylbenzoyl-CoA (OSB-CoA) to 1,4-dihydroxy-2-naphthoyl-CoA (DHNA-CoA). The polypeptide is 1,4-dihydroxy-2-naphthoyl-CoA synthase (Escherichia coli (strain K12)).